Consider the following 132-residue polypeptide: Protein NrdI (132 aa).

The protein belongs to the NrdI family.

Probably involved in ribonucleotide reductase function. This chain is Protein NrdI, found in Staphylococcus haemolyticus (strain JCSC1435).